The chain runs to 238 residues: Cysteine-rich venom protein natrin-2 (238 aa).

The signal sequence occupies residues 1 to 19; the sequence is MIAFIVLLSLAAVLQQSSG. The SCP domain occupies 38 to 164; sequence VDKHNALRRS…SSKYLYVCQY (127 aa). 8 disulfides stabilise this stretch: Cys-75–Cys-153, Cys-92–Cys-165, Cys-148–Cys-162, Cys-184–Cys-191, Cys-187–Cys-196, Cys-200–Cys-233, Cys-209–Cys-227, and Cys-218–Cys-231. A ShKT domain is found at 200-233; it reads CKHHNVFSNCQSLAKQNACQTEWMKSKCAASCFC.

In terms of tissue distribution, expressed by the venom gland.

It localises to the secreted. Its function is as follows. Inhibits carbachol-induced muscle contraction and weakly blocks muscle contraction evoked by potassium. This Naja atra (Chinese cobra) protein is Cysteine-rich venom protein natrin-2.